The following is a 476-amino-acid chain: Aspartyl/glutamyl-tRNA(Asn/Gln) amidotransferase subunit B (476 aa).

It belongs to the GatB/GatE family. GatB subfamily. Heterotrimer of A, B and C subunits.

The enzyme catalyses L-glutamyl-tRNA(Gln) + L-glutamine + ATP + H2O = L-glutaminyl-tRNA(Gln) + L-glutamate + ADP + phosphate + H(+). The catalysed reaction is L-aspartyl-tRNA(Asn) + L-glutamine + ATP + H2O = L-asparaginyl-tRNA(Asn) + L-glutamate + ADP + phosphate + 2 H(+). Functionally, allows the formation of correctly charged Asn-tRNA(Asn) or Gln-tRNA(Gln) through the transamidation of misacylated Asp-tRNA(Asn) or Glu-tRNA(Gln) in organisms which lack either or both of asparaginyl-tRNA or glutaminyl-tRNA synthetases. The reaction takes place in the presence of glutamine and ATP through an activated phospho-Asp-tRNA(Asn) or phospho-Glu-tRNA(Gln). The sequence is that of Aspartyl/glutamyl-tRNA(Asn/Gln) amidotransferase subunit B from Listeria monocytogenes serotype 4b (strain CLIP80459).